We begin with the raw amino-acid sequence, 503 residues long: Probable cytosol aminopeptidase (503 aa).

Residues K270 and D275 each coordinate Mn(2+). The active site involves K282. Residues D293, D352, and E354 each coordinate Mn(2+). R356 is an active-site residue.

Belongs to the peptidase M17 family. Requires Mn(2+) as cofactor.

It is found in the cytoplasm. It carries out the reaction Release of an N-terminal amino acid, Xaa-|-Yaa-, in which Xaa is preferably Leu, but may be other amino acids including Pro although not Arg or Lys, and Yaa may be Pro. Amino acid amides and methyl esters are also readily hydrolyzed, but rates on arylamides are exceedingly low.. The enzyme catalyses Release of an N-terminal amino acid, preferentially leucine, but not glutamic or aspartic acids.. Its function is as follows. Presumably involved in the processing and regular turnover of intracellular proteins. Catalyzes the removal of unsubstituted N-terminal amino acids from various peptides. This Salmonella typhi protein is Probable cytosol aminopeptidase.